Here is a 98-residue protein sequence, read N- to C-terminus: Guanine nucleotide-binding protein subunit gamma 1 (98 aa).

The 80-residue stretch at 19–98 (GKHRILAELA…GGEGCRCLIL (80 aa)) folds into the G protein gamma domain. A coiled-coil region spans residues 20–50 (KHRILAELARVEQEVAFLEKELKEVENTDIV). Residues 88–94 (NGGEGCR) form a regulates lipidation and cell membrane subcellular localization region. A lipid anchor (S-palmitoyl cysteine) is attached at C93. Position 95 is a cysteine methyl ester (C95). A lipid anchor (S-farnesyl cysteine) is attached at C95. A propeptide spans 96–98 (LIL) (removed in mature form).

In terms of assembly, g proteins are composed of 3 units, alpha, beta and gamma. Interacts with the beta subunit GB1. The dimer GB1-GG1 interacts with NDL1, NDL2 and NDL3. Binds to NUDT7. In terms of tissue distribution, mostly expressed in seedlings (especially at the hypocotyl/root junction), young cauline leaves, open flowers, and floral stems, and, to a lower extent, in roots (restricted to the stele), rosette leaves (restricted to veins), siliques, and unopened floral buds. Also present in hydathods.

It is found in the cell membrane. Its subcellular location is the golgi apparatus membrane. The protein resides in the golgi apparatus. The protein localises to the trans-Golgi network membrane. It localises to the cytoplasm. Functionally, guanine nucleotide-binding proteins (G proteins) are involved as a modulator or transducer in various transmembrane signaling systems. The beta and gamma chains are required for the GTPase activity, for replacement of GDP by GTP, and for G protein-effector interaction. Involved in the abscisic acid (ABA) and ethylene signaling pathways. Regulates acropetal transport of auxin (IAA) in roots and hypocotyls, and thus modulates root architecture (e.g. lateral root formation). The heterotrimeric G-protein controls defense responses to necrotrophic and vascular fungi probably by modulating cell wall-related genes expression; involved in resistance to fungal pathogens such as Alternaria brassicicola, Plectosphaerella cucumerina and Fusarium oxysporum. In Arabidopsis thaliana (Mouse-ear cress), this protein is Guanine nucleotide-binding protein subunit gamma 1 (GG1).